We begin with the raw amino-acid sequence, 483 residues long: Xylulose kinase (483 aa).

79–80 (MH) is a binding site for substrate.

Belongs to the FGGY kinase family.

The enzyme catalyses D-xylulose + ATP = D-xylulose 5-phosphate + ADP + H(+). In terms of biological role, catalyzes the phosphorylation of D-xylulose to D-xylulose 5-phosphate. This Staphylococcus xylosus protein is Xylulose kinase.